A 373-amino-acid chain; its full sequence is 3-dehydroquinate synthase (373 aa).

NAD(+)-binding positions include E67–K72, G101–D105, T125–T126, K138, and K147. Zn(2+) contacts are provided by E180, H240, and H256.

The protein belongs to the sugar phosphate cyclases superfamily. Dehydroquinate synthase family. NAD(+) is required as a cofactor. The cofactor is Co(2+). It depends on Zn(2+) as a cofactor.

It localises to the cytoplasm. The enzyme catalyses 7-phospho-2-dehydro-3-deoxy-D-arabino-heptonate = 3-dehydroquinate + phosphate. The protein operates within metabolic intermediate biosynthesis; chorismate biosynthesis; chorismate from D-erythrose 4-phosphate and phosphoenolpyruvate: step 2/7. Functionally, catalyzes the conversion of 3-deoxy-D-arabino-heptulosonate 7-phosphate (DAHP) to dehydroquinate (DHQ). The sequence is that of 3-dehydroquinate synthase (aroB) from Chlamydia muridarum (strain MoPn / Nigg).